Consider the following 316-residue polypeptide: BTB/POZ domain-containing adapter for CUL3-mediated RhoA degradation protein 2 (316 aa).

The BTB domain occupies 28–96 (KYVQLNVGGS…LRDDTVTLPQ (69 aa)). Polar residues predominate over residues 268–279 (EATSRSRSQASP). The tract at residues 268–287 (EATSRSRSQASPSEDEDTFE) is disordered. S278 carries the phosphoserine modification. S280 bears the Phosphoserine; by CK2 mark.

The protein belongs to the BACURD family. As to quaternary structure, component of the BCR(TNFAIP1) E3 ubiquitin ligase complex, at least composed of CUL3, TNFAIP1/BACURD2 and RBX1. Interacts with RHOA; with a preference for RhoA-GDP. Interacts with RHOB. Interacts with CSNK2B. Interacts with PCNA. In terms of processing, phosphorylation at Ser-280 by CK2 facilitates the nucleus localization and increases interaction with PCNA.

It localises to the cytoplasm. The protein localises to the nucleus. It is found in the endosome. It participates in protein modification; protein ubiquitination. Substrate-specific adapter of a BCR (BTB-CUL3-RBX1) E3 ubiquitin-protein ligase complex involved in regulation of cytoskeleton structure. The BCR(TNFAIP1) E3 ubiquitin ligase complex mediates the ubiquitination of RHOA, leading to its degradation by the proteasome, thereby regulating the actin cytoskeleton and cell migration. Its interaction with RHOB may regulate apoptosis. May enhance the PCNA-dependent DNA polymerase delta activity. The sequence is that of BTB/POZ domain-containing adapter for CUL3-mediated RhoA degradation protein 2 (Tnfaip1) from Rattus norvegicus (Rat).